A 208-amino-acid chain; its full sequence is Outer-membrane lipoprotein carrier protein (208 aa).

Positions 1-22 are cleaved as a signal peptide; that stretch reads MKNLLCAVMLTSPLLYSTAVFA.

It belongs to the LolA family. Monomer.

It localises to the periplasm. Functionally, participates in the translocation of lipoproteins from the inner membrane to the outer membrane. Only forms a complex with a lipoprotein if the residue after the N-terminal Cys is not an aspartate (The Asp acts as a targeting signal to indicate that the lipoprotein should stay in the inner membrane). The protein is Outer-membrane lipoprotein carrier protein of Shewanella putrefaciens (strain CN-32 / ATCC BAA-453).